The chain runs to 359 residues: Cyclic AMP response element-binding protein B (359 aa).

Disordered stretches follow at residues 1–73 (MDNS…AQGG) and 185–238 (VRNK…FTEI). Residues 9–32 (NGNSSAASGSNDVVDVVAQQAAAA) show a composition bias toward low complexity. The span at 33 to 47 (VGGGGGGGGGGGGGN) shows a compositional bias: gly residues. Residues 48-70 (PQQQQQNPQSTTAGGPTGATNNA) show a composition bias toward low complexity. A KID domain is found at 198-257 (KPEPNTQHPEDSDESLSDDDSQHHRSELTRRPSYNKIFTEISGPDMSGASLPMSDGVLNS). Phosphoserine occurs at positions 209, 212, and 214. The segment covering 217–227 (DSQHHRSELTR) has biased composition (basic and acidic residues). Residues 300–359 (TRKREIRLQKNREAARECRRKKKEYIKCLENRVAVLENQNKALIEELKSLKELYCQTKND) enclose the bZIP domain. Positions 301–326 (RKREIRLQKNREAARECRRKKKEYIK) are basic motif. Positions 328–349 (LENRVAVLENQNKALIEELKSL) are leucine-zipper.

Belongs to the bZIP family. ATF subfamily. In terms of assembly, homodimer. In terms of tissue distribution, most cells of the adult brain; cell bodies, but not neuropil.

The protein resides in the nucleus. In terms of biological role, isoform E is a PKA-dependent transcriptional activator. Isoform J is a direct antagonist of activation by isoform E in cell culture. Binds the cAMP response element (CRE) (consensus: 5'-GTGACGT[AC][AG]-3'), a sequence present in many viral and cellular promoters. Has a role in long-term memory. The polypeptide is Cyclic AMP response element-binding protein B (Drosophila melanogaster (Fruit fly)).